Reading from the N-terminus, the 688-residue chain is Translation initiation factor IF-2 (688 aa).

The segment covering L50–E62 has biased composition (basic and acidic residues). A disordered region spans residues L50–N95. Residues K72–K82 are compositionally biased toward low complexity. Over residues K86–N95 the composition is skewed to basic and acidic residues. One can recognise a tr-type G domain in the interval K187–E354. The segment at G196–T203 is G1. G196–T203 provides a ligand contact to GTP. Residues G221–H225 form a G2 region. Positions D242–G245 are G3. GTP is bound by residues D242–H246 and N296–D299. Residues N296–D299 are G4. The tract at residues S332–H334 is G5.

Belongs to the TRAFAC class translation factor GTPase superfamily. Classic translation factor GTPase family. IF-2 subfamily.

It is found in the cytoplasm. Its function is as follows. One of the essential components for the initiation of protein synthesis. Protects formylmethionyl-tRNA from spontaneous hydrolysis and promotes its binding to the 30S ribosomal subunits. Also involved in the hydrolysis of GTP during the formation of the 70S ribosomal complex. The sequence is that of Translation initiation factor IF-2 from Clostridium botulinum (strain 657 / Type Ba4).